Reading from the N-terminus, the 390-residue chain is 8-amino-7-oxononanoate synthase (390 aa).

Arginine 19 lines the substrate pocket. 106–107 (GY) is a binding site for pyridoxal 5'-phosphate. Histidine 131 is a binding site for substrate. Positions 176, 204, and 233 each coordinate pyridoxal 5'-phosphate. The residue at position 236 (lysine 236) is an N6-(pyridoxal phosphate)lysine. Threonine 350 contacts substrate.

Belongs to the class-II pyridoxal-phosphate-dependent aminotransferase family. BioF subfamily. Homodimer. Requires pyridoxal 5'-phosphate as cofactor.

It catalyses the reaction 6-carboxyhexanoyl-[ACP] + L-alanine + H(+) = (8S)-8-amino-7-oxononanoate + holo-[ACP] + CO2. Its pathway is cofactor biosynthesis; biotin biosynthesis. Catalyzes the decarboxylative condensation of pimeloyl-[acyl-carrier protein] and L-alanine to produce 8-amino-7-oxononanoate (AON), [acyl-carrier protein], and carbon dioxide. The protein is 8-amino-7-oxononanoate synthase of Pseudomonas entomophila (strain L48).